The following is a 186-amino-acid chain: Methylamine dehydrogenase light chain (186 aa).

Residues 1–57 (MLGKSQFDDLFEKMSRKVAGHTSRRGFIGRVGTAVAGVALVPLLPVDRRGRVSRANA) constitute a signal peptide (tat-type signal). Intrachain disulfides connect Cys78-Cys143, Cys84-Cys116, Cys91-Cys176, Cys93-Cys141, Cys101-Cys132, and Cys133-Cys164. The residue at position 112 (Trp112) is a Tryptophylquinone. A cross-link (tryptophan tryptophylquinone (Trp-Trp)) is located at residues 112–163 (WVASCYNPTDKQSYLISYRDCCGANVSGRCACLNTEGELPVYRPEFGNDIIW).

This sequence belongs to the aromatic amine dehydrogenase light chain family. As to quaternary structure, heterotetramer of two light and two heavy chains. Tryptophan tryptophylquinone residue serves as cofactor. Post-translationally, predicted to be exported by the Tat system. The position of the signal peptide cleavage has been experimentally proven. Tryptophan tryptophylquinone (TTQ) is formed by oxidation of the indole ring of a tryptophan to form tryptophylquinone followed by covalent cross-linking with another tryptophan residue.

The protein localises to the periplasm. The catalysed reaction is 2 oxidized [amicyanin] + methylamine + H2O = 2 reduced [amicyanin] + formaldehyde + NH4(+) + 2 H(+). Its pathway is one-carbon metabolism; methylamine degradation; formaldehyde from methylamine: step 1/1. In terms of biological role, methylamine dehydrogenase carries out the oxidation of methylamine. Electrons are passed from methylamine dehydrogenase to amicyanin. This Methylorubrum extorquens (strain ATCC 14718 / DSM 1338 / JCM 2805 / NCIMB 9133 / AM1) (Methylobacterium extorquens) protein is Methylamine dehydrogenase light chain (mauA).